Consider the following 398-residue polypeptide: Cysteine protease ATG4A (398 aa).

Cys77 functions as the Nucleophile in the catalytic mechanism. Catalysis depends on residues Asp279 and His281. Positions 393-396 match the LIR motif; the sequence is FEIL.

This sequence belongs to the peptidase C54 family. As to quaternary structure, interacts with ATG9A; the interaction is direct.

It localises to the cytoplasm. The enzyme catalyses [protein]-C-terminal L-amino acid-glycyl-phosphatidylethanolamide + H2O = [protein]-C-terminal L-amino acid-glycine + a 1,2-diacyl-sn-glycero-3-phosphoethanolamine. Its activity is regulated as follows. Inhibited by N-ethylmaleimide. Redox-regulated during autophagy since reducing conditions activate ATG4A whereas an oxidizing environment such as the presence of H(2)O(2) inhibits its activity. Its function is as follows. Cysteine protease that plays a key role in autophagy by mediating both proteolytic activation and delipidation of ATG8 family proteins. The protease activity is required for proteolytic activation of ATG8 family proteins: cleaves the C-terminal amino acid of ATG8 proteins to reveal a C-terminal glycine. Exposure of the glycine at the C-terminus is essential for ATG8 proteins conjugation to phosphatidylethanolamine (PE) and insertion to membranes, which is necessary for autophagy. Preferred substrate is GABARAPL2 followed by MAP1LC3A and GABARAP. Protease activity is also required to counteract formation of high-molecular weight conjugates of ATG8 proteins (ATG8ylation): acts as a deubiquitinating-like enzyme that removes ATG8 conjugated to other proteins, such as ATG3. In addition to the protease activity, also mediates delipidation of ATG8 family proteins. Catalyzes delipidation of PE-conjugated forms of ATG8 proteins during macroautophagy. Compared to ATG4B, the major protein for proteolytic activation of ATG8 proteins, shows weaker ability to cleave the C-terminal amino acid of ATG8 proteins, while it displays stronger delipidation activity. Involved in phagophore growth during mitophagy independently of its protease activity and of ATG8 proteins: acts by regulating ATG9A trafficking to mitochondria and promoting phagophore-endoplasmic reticulum contacts during the lipid transfer phase of mitophagy. This Pongo abelii (Sumatran orangutan) protein is Cysteine protease ATG4A.